A 421-amino-acid chain; its full sequence is Phosphoribosylamine--glycine ligase (421 aa).

The region spanning 108–314 is the ATP-grasp domain; that stretch reads KEIMVKYNVP…FAQNIDDIMM (207 aa). 134–195 contacts ATP; sequence IEEQGAPIVV…EEFLDGEEFS (62 aa). The Mg(2+) site is built by glutamate 284 and asparagine 286.

This sequence belongs to the GARS family. The cofactor is Mg(2+). Requires Mn(2+) as cofactor.

The catalysed reaction is 5-phospho-beta-D-ribosylamine + glycine + ATP = N(1)-(5-phospho-beta-D-ribosyl)glycinamide + ADP + phosphate + H(+). It functions in the pathway purine metabolism; IMP biosynthesis via de novo pathway; N(1)-(5-phospho-D-ribosyl)glycinamide from 5-phospho-alpha-D-ribose 1-diphosphate: step 2/2. The polypeptide is Phosphoribosylamine--glycine ligase (Streptococcus pyogenes serotype M6 (strain ATCC BAA-946 / MGAS10394)).